The chain runs to 231 residues: Ribose-5-phosphate isomerase A (231 aa).

Substrate is bound by residues 32 to 35 (TGST), 85 to 88 (DGAD), and 98 to 101 (KGGG). Catalysis depends on Glu-107, which acts as the Proton acceptor. Position 125 (Lys-125) interacts with substrate.

The protein belongs to the ribose 5-phosphate isomerase family. As to quaternary structure, homodimer.

The catalysed reaction is aldehydo-D-ribose 5-phosphate = D-ribulose 5-phosphate. It functions in the pathway carbohydrate degradation; pentose phosphate pathway; D-ribose 5-phosphate from D-ribulose 5-phosphate (non-oxidative stage): step 1/1. In terms of biological role, catalyzes the reversible conversion of ribose-5-phosphate to ribulose 5-phosphate. The protein is Ribose-5-phosphate isomerase A of Paraburkholderia xenovorans (strain LB400).